The primary structure comprises 240 residues: 2,3-bisphosphoglycerate-dependent phosphoglycerate mutase (240 aa).

Residues 5–12 (RHGESVWN), 18–19 (TG), arginine 57, 84–87 (ERHY), lysine 95, 111–112 (RR), and 180–181 (GN) each bind substrate. The active-site Tele-phosphohistidine intermediate is the histidine 6. The Proton donor/acceptor role is filled by glutamate 84.

The protein belongs to the phosphoglycerate mutase family. BPG-dependent PGAM subfamily. In terms of assembly, homodimer.

It catalyses the reaction (2R)-2-phosphoglycerate = (2R)-3-phosphoglycerate. It participates in carbohydrate degradation; glycolysis; pyruvate from D-glyceraldehyde 3-phosphate: step 3/5. Functionally, catalyzes the interconversion of 2-phosphoglycerate and 3-phosphoglycerate. This is 2,3-bisphosphoglycerate-dependent phosphoglycerate mutase from Nitrosococcus oceani (strain ATCC 19707 / BCRC 17464 / JCM 30415 / NCIMB 11848 / C-107).